The primary structure comprises 292 residues: Glycine--tRNA ligase alpha subunit (292 aa).

This sequence belongs to the class-II aminoacyl-tRNA synthetase family. Tetramer of two alpha and two beta subunits.

The protein localises to the cytoplasm. The enzyme catalyses tRNA(Gly) + glycine + ATP = glycyl-tRNA(Gly) + AMP + diphosphate. The polypeptide is Glycine--tRNA ligase alpha subunit (Desulfovibrio desulfuricans (strain ATCC 27774 / DSM 6949 / MB)).